The primary structure comprises 650 residues: Amyloid beta precursor like protein 1 (650 aa).

The N-terminal stretch at 1–38 (MGPASPAARGLSRRPGQPPLPLLLPLLLLLLRAQPAIG) is a signal peptide. Residues 39 to 580 (SLAGGSPGAA…APAGTGVSRE (542 aa)) are Extracellular-facing. The segment at 50–146 (APGSAQVAGL…PFRCLPGEFV (97 aa)) is GFLD subdomain. The 163-residue stretch at 50-212 (APGSAQVAGL…RGVEYVCCPP (163 aa)) folds into the E1 domain. Intrachain disulfides connect Cys-60–Cys-84, Cys-95–Cys-140, Cys-120–Cys-128, Cys-156–Cys-210, Cys-167–Cys-197, and Cys-181–Cys-209. The tract at residues 154–212 (EGCRFLHQERMDQCESSTRRHQEAQEACSSQGLILHGSGMLLPCGSDRFRGVEYVCCPP) is cuBD subdomain. His-174 is a binding site for Cu(2+). 3 residues coordinate Zn(2+): Glu-206, Cys-209, and Cys-210. The interval 214 to 287 (GTPDPSGTAV…LAVVGKVTPT (74 aa)) is disordered. Residue Thr-215 is glycosylated (O-linked (GalNAc...) threonine). Ser-227 is a glycosylation site (O-linked (GalNAc...) serine). Residue Thr-228 is glycosylated (O-linked (GalNAc...) threonine). Positions 285 to 305 (TPTPRPTDGVDIYFGMPGEIS) are O-glycosylated at three sites. One can recognise an E2 domain in the interval 293–484 (GVDIYFGMPG…QELRPQIQEL (192 aa)). 2 heparin-binding regions span residues 310–342 (FLRA…SKNL) and 410–441 (LLAL…DPEK). N-linked (GlcNAc...) asparagine glycosylation is present at Asn-337. A collagen-binding region spans residues 442 to 459 (AQQMRFQVHTHLQVIEER). N-linked (GlcNAc...) asparagine glycosylation occurs at Asn-461. The tract at residues 492–546 (PSELEAPAPGGSSEDKGGLQPPDSKDDTPMTLPKGSTEQDAASPEKEKMNPLEQY) is disordered. 2 stretches are compositionally biased toward basic and acidic residues: residues 504–519 (SEDK…KDDT) and 534–546 (SPEK…LEQY). The N-linked (GlcNAc...) asparagine glycan is linked to Asn-551. His-561 serves as a coordination point for Cu(2+). His-561 serves as a coordination point for Zn(2+). A helical membrane pass occupies residues 581–603 (AVSGLLIMGAGGGSLIVLSMLLL). Positions 604 to 615 (RRKKPYGAISHG) match the Basolateral sorting signal motif. The Cytoplasmic portion of the chain corresponds to 604 to 650 (RRKKPYGAISHGVVEVDPMLTLEEQQLRELQRHGYENPTYRFLEERP). An interaction with DAB1 region spans residues 632 to 649 (ELQRHGYENPTYRFLEER). The interaction with DAB2 stretch occupies residues 636 to 650 (HGYENPTYRFLEERP). A Clathrin-binding motif is present at residues 640 to 643 (NPTY). The short motif at 640–643 (NPTY) is the NPXY motif; contains endocytosis signal element.

The protein belongs to the APP family. In terms of assembly, monomer and homodimer. Heparin binding promotes homodimerization. Binds, via its C-terminus, to the PID domain of several cytoplasmic proteins, including APBB and APBA family members, MAPK8IP1 and DAB1. Binding to Dab1 inhibits its serine phosphorylation. Interacts with CPEB1. Interacts (via NPXY motif) with DAB2 (via PID domain); the interaction is impaired by tyrosine phosphorylation of the NPXY motif. Interacts (via NPXY motif) with DAB1. In terms of processing, proteolytically cleaved by caspases during neuronal apoptosis. Cleaved, in vitro, at Asp-620 by caspase-3. Post-translationally, N- and O-glycosylated. O-glycosylation with core 1 or possibly core 8 glycans. Glycosylation on Ser-227 is the preferred site to Thr-228. As to expression, expressed in the cerebral cortex where it is localized to the postsynaptic density (PSD).

The protein resides in the cell membrane. The protein localises to the cytoplasm. Functionally, may play a role in postsynaptic function. The C-terminal gamma-secretase processed fragment, ALID1, activates transcription activation through APBB1 (Fe65) binding. Couples to JIP signal transduction through C-terminal binding. May interact with cellular G-protein signaling pathways. Can regulate neurite outgrowth through binding to components of the extracellular matrix such as heparin and collagen I. In terms of biological role, the gamma-CTF peptide, C30, is a potent enhancer of neuronal apoptosis. This Homo sapiens (Human) protein is Amyloid beta precursor like protein 1 (APLP1).